The sequence spans 226 residues: UPF0758 protein Daci_1904 (226 aa).

One can recognise an MPN domain in the interval 104 to 226 (ALASPEAVAR…SLSMAGQGML (123 aa)). Zn(2+) is bound by residues histidine 175, histidine 177, and aspartate 188. A JAMM motif motif is present at residues 175–188 (HNHPSGQVQASAAD).

Belongs to the UPF0758 family.

In Delftia acidovorans (strain DSM 14801 / SPH-1), this protein is UPF0758 protein Daci_1904.